The chain runs to 190 residues: GTP cyclohydrolase 1 (190 aa).

Residues C75, H78, and C146 each contribute to the Zn(2+) site.

Belongs to the GTP cyclohydrolase I family. Homomer.

The enzyme catalyses GTP + H2O = 7,8-dihydroneopterin 3'-triphosphate + formate + H(+). The protein operates within cofactor biosynthesis; 7,8-dihydroneopterin triphosphate biosynthesis; 7,8-dihydroneopterin triphosphate from GTP: step 1/1. The polypeptide is GTP cyclohydrolase 1 (Campylobacter jejuni subsp. jejuni serotype O:6 (strain 81116 / NCTC 11828)).